The chain runs to 158 residues: C-type lectin TsL (158 aa).

The N-terminal stretch at 1-23 is a signal peptide; sequence MGRFIFVSFGLLVVFLSLSGAKG. The C-type lectin domain occupies 24–158; that stretch reads SCCTNDSLPM…KNSFLCQCKF (135 aa). Intrachain disulfides connect C26–C37, C54–C154, C61–C156, and C129–C146. The N-linked (GlcNAc...) (high mannose) asparagine glycan is linked to N28. Q119, D121, E127, N142, and D143 together coordinate Ca(2+). Residues 119-121 carry the Galactose-binding motif; it reads QPD.

Belongs to the true venom lectin family. In terms of assembly, homodimer; disulfide-linked. In terms of tissue distribution, expressed by the venom gland.

It localises to the secreted. Galactose-binding protein which recognizes specific carbohydrate structures and agglutinates a variety of animal cells by binding to cell-surface glycoproteins and glycolipids. May be a calcium-dependent lectin. This is C-type lectin TsL from Trimeresurus stejnegeri (Chinese green tree viper).